A 77-amino-acid polypeptide reads, in one-letter code: U8-lycotoxin-Ls1w (77 aa).

The N-terminal stretch at 1-20 (MKLIIFTGLVLFAIVSLIEA) is a signal peptide. Residues 21–26 (QAENEK) constitute a propeptide that is removed on maturation.

The protein belongs to the neurotoxin 19 (CSTX) family. 08 (U8-Lctx) subfamily. Contains 4 disulfide bonds. As to expression, expressed by the venom gland.

It localises to the secreted. In Lycosa singoriensis (Wolf spider), this protein is U8-lycotoxin-Ls1w.